Reading from the N-terminus, the 248-residue chain is MGGRDYTLYLFAALGSFLIVYIALPIIVIFTKQALDFRMLVKTIHDPLVIEALRNSLLTATATALISLLFGVPLGYVLARKDFRGKSLVQAIIDVPIVIPHSVVGIMLLVTFSNAILDSYKGIIAAMLFVSAPFAINSARDGFLAVDEKLEHVARTLGASKLRTFFSISLPIALPSIASGAIMAWARGISEVGAILIVAYYPKTAQVLVMEYFNNYGLRASRPISVILMGISLGIFVVLRWLIGKAKS.

The Cytoplasmic segment spans residues 1–9; sequence MGGRDYTLY. The helical transmembrane segment at 10–30 threads the bilayer; it reads LFAALGSFLIVYIALPIIVIF. At 31 to 56 the chain is on the extracellular side; it reads TKQALDFRMLVKTIHDPLVIEALRNS. Positions 53-239 constitute an ABC transmembrane type-1 domain; it reads LRNSLLTATA…GISLGIFVVL (187 aa). A helical membrane pass occupies residues 57 to 77; it reads LLTATATALISLLFGVPLGYV. Over 78-91 the chain is Cytoplasmic; that stretch reads LARKDFRGKSLVQA. A helical transmembrane segment spans residues 92-112; the sequence is IIDVPIVIPHSVVGIMLLVTF. Over 113-115 the chain is Extracellular; sequence SNA. Residues 116-136 traverse the membrane as a helical segment; sequence ILDSYKGIIAAMLFVSAPFAI. The Cytoplasmic segment spans residues 137–164; the sequence is NSARDGFLAVDEKLEHVARTLGASKLRT. A helical transmembrane segment spans residues 165–185; it reads FFSISLPIALPSIASGAIMAW. Topologically, residues 186 to 223 are extracellular; that stretch reads ARGISEVGAILIVAYYPKTAQVLVMEYFNNYGLRASRP. The helical transmembrane segment at 224 to 244 threads the bilayer; it reads ISVILMGISLGIFVVLRWLIG. Residues 245–248 are Cytoplasmic-facing; it reads KAKS.

Belongs to the binding-protein-dependent transport system permease family. As to quaternary structure, the complex is composed of two ATP-binding proteins (WtpC), two transmembrane proteins (WtpB) and a solute-binding protein (WtpA).

The protein resides in the cell membrane. In terms of biological role, part of the ABC transporter complex WtpABC involved in molybdate/tungstate import. Probably responsible for the translocation of the substrate across the membrane. The sequence is that of Molybdate/tungstate transport system permease protein WtpB (wtpB) from Pyrococcus abyssi (strain GE5 / Orsay).